The following is a 731-amino-acid chain: Unconventional prefoldin RPB5 interactor-like protein (731 aa).

2 coiled-coil regions span residues 91–115 (RLKL…KLHT) and 143–176 (LAEH…LRKL). The span at 205–217 (PLKSTNESSPKSL) shows a compositional bias: polar residues. 3 disordered regions span residues 205–224 (PLKS…EEDE), 259–302 (MSGE…EEEV), and 370–396 (ASEE…TVSE). The stretch at 220-258 (EEEDELWKKLEAEEQNEADELSSEAEESLKTTDNLVRQL) forms a coiled coil. Residues 285–300 (ISEDDGDDDDEGDQEE) show a composition bias toward acidic residues. Coiled coils occupy residues 357-379 (DDLQ…EVVE) and 452-477 (SIKT…VKEN). Composition is skewed to polar residues over residues 508–518 (GAIPSPSSDQS) and 575–599 (SQFS…TSND). 3 disordered regions span residues 508–527 (GAIP…KPSD), 567–682 (GSAY…DLRD), and 694–731 (VEKE…LNKT). The span at 611–621 (FYEKYEKDRAK) shows a compositional bias: basic and acidic residues. The span at 623 to 644 (SKSNSSEGDATDPESATKSILR) shows a compositional bias: polar residues. The span at 661–673 (KKGRKVRNQKKKE) shows a compositional bias: basic residues. Basic and acidic residues predominate over residues 721 to 731 (RFKEQRALNKT).

This sequence belongs to the RNA polymerase II subunit 5-mediating protein family. As to quaternary structure, interacts with serine/threonine-protein phosphatases flw/PP1beta9C and Pp1-87B with higher affinity for Pp1-87B.

It localises to the cytoplasm. The protein localises to the chromosome. It is found in the nucleus. Inhibits the activity of serine/threonine-protein phosphatases flw/PP1beta9C and Pp1-87B. Required for germ line cell viability and differentiation, normal transcriptional activity and maintenance of DNA integrity. The chain is Unconventional prefoldin RPB5 interactor-like protein from Drosophila melanogaster (Fruit fly).